The primary structure comprises 438 residues: Tyrosine--tRNA ligase (438 aa).

Tyr47 lines the L-tyrosine pocket. A 'HIGH' region motif is present at residues 52-61; the sequence is PTATSLHVGG. Tyr183 and Gln187 together coordinate L-tyrosine. The 'KMSKS' region motif lies at 243–247; sequence KMGKT. Lys246 is a binding site for ATP. The 67-residue stretch at 370-436 folds into the S4 RNA-binding domain; sequence LWIVEALQTA…GKRKYALLKI (67 aa).

The protein belongs to the class-I aminoacyl-tRNA synthetase family. TyrS type 1 subfamily. As to quaternary structure, homodimer.

The protein resides in the cytoplasm. The catalysed reaction is tRNA(Tyr) + L-tyrosine + ATP = L-tyrosyl-tRNA(Tyr) + AMP + diphosphate + H(+). Its function is as follows. Catalyzes the attachment of tyrosine to tRNA(Tyr) in a two-step reaction: tyrosine is first activated by ATP to form Tyr-AMP and then transferred to the acceptor end of tRNA(Tyr). In Rhodopirellula baltica (strain DSM 10527 / NCIMB 13988 / SH1), this protein is Tyrosine--tRNA ligase.